The chain runs to 120 residues: Non-specific lipid-transfer protein 2 (120 aa).

The N-terminal stretch at methionine 1–alanine 25 is a signal peptide. 4 disulfides stabilise this stretch: cysteine 29–cysteine 78, cysteine 39–cysteine 55, cysteine 56–cysteine 101, and cysteine 76–cysteine 115.

The protein belongs to the plant LTP family. In terms of tissue distribution, expressed in roots, stem, leaves and tendrils of the mature plant.

Functionally, plant non-specific lipid-transfer proteins transfer phospholipids as well as galactolipids across membranes. May play a role in wax or cutin deposition in the cell walls of expanding epidermal cells and certain secretory tissues. In Pisum sativum (Garden pea), this protein is Non-specific lipid-transfer protein 2.